Consider the following 528-residue polypeptide: Equilibrative nucleoside transporter 4 (528 aa).

The Extracellular portion of the chain corresponds to 1-68 (MGSIGSQRLK…EEPVPDDRYH (68 aa)). The helical transmembrane segment at 69 to 89 (AIYFAMLLAGVGFLLPYNSFI) threads the bilayer. Residues 90–101 (TDVDYLHHKYPG) are Cytoplasmic-facing. A helical transmembrane segment spans residues 102–122 (TSIVFDMSLTYILVALAAVLL). Over 123-139 (NNVVVERLNLHTRITTG) the chain is Extracellular. A helical membrane pass occupies residues 140-160 (YLLALGPLLFISICDVWLQLF). At 161–166 (SHDQAY) the chain is on the cytoplasmic side. The chain crosses the membrane as a helical span at residues 167 to 187 (AINLAAVGTVAFGCTVQQSSF). Over 188 to 231 (YGYTGLLPKRYTQGVMTGESTAGVMISLSRILTKLLLPDERAST) the chain is Extracellular. A helical membrane pass occupies residues 232–252 (IIFFLVSAGLELLCFLLHLLV). The Cytoplasmic portion of the chain corresponds to 253-346 (RRSRFVLYYT…LLLHRYVVAR (94 aa)). A helical membrane pass occupies residues 347 to 367 (VIWADMLSIAVTYFITLCLFP). Residues 368–376 (GLESEIRHC) lie on the Extracellular side of the membrane. Residues 377-397 (VLGEWLPILVMAVFNLSDFVG) form a helical membrane-spanning segment. The Cytoplasmic segment spans residues 398–411 (KILAALPVEWRGTH). A helical membrane pass occupies residues 412-432 (LLACSCLRVVFIPLFILCVYP). Over 433–445 (SGMPALRHPAWPC) the chain is Extracellular. The chain crosses the membrane as a helical span at residues 446 to 466 (VFSLLMGISNGYFGSVPMILA). Residues 467 to 481 (AGKVSPKQRELAGNT) are Cytoplasmic-facing. A helical transmembrane segment spans residues 482–504 (MTVSYMSGLTLGSAVAYCTYSLT). The Extracellular portion of the chain corresponds to 505–528 (RDAHGSCFQTATAAAANDSIPVGP). A glycan (N-linked (GlcNAc...) asparagine) is linked at Asn521.

The protein belongs to the SLC29A/ENT transporter (TC 2.A.57) family. N-glycosylated. As to expression, expressed in heart. Expressed in choroid plexus.

Its subcellular location is the cell membrane. The protein resides in the apical cell membrane. It catalyses the reaction serotonin(out) = serotonin(in). The catalysed reaction is dopamine(out) = dopamine(in). It carries out the reaction (R)-noradrenaline(out) = (R)-noradrenaline(in). The enzyme catalyses (R)-adrenaline(out) = (R)-adrenaline(in). It catalyses the reaction histamine(out) = histamine(in). The catalysed reaction is tyramine(in) = tyramine(out). It carries out the reaction guanidine(out) = guanidine(in). The enzyme catalyses adenine(out) = adenine(in). It catalyses the reaction adenosine(in) = adenosine(out). Its activity is regulated as follows. Activated at acidic pH. Functionally, electrogenic voltage-dependent transporter that mediates the transport of a variety of endogenous bioactive amines, cationic xenobiotics and drugs. Utilizes the physiologic inside-negative membrane potential as a driving force to facilitate cellular uptake of organic cations. Functions as a Na(+)- and Cl(-)-independent bidirectional transporter. Substrate transport is pH-dependent and enhanced under acidic condition, which is most likely the result of allosteric changes in the transporter structure. Implicated in monoamine neurotransmitters uptake such as serotonin, dopamine, adrenaline/epinephrine, noradrenaline/norepinephrine, histamine and tyramine, thereby supporting a role in homeostatic regulation of aminergic neurotransmission in the central nervous system. Also responsible for the uptake of bioactive amines and drugs through the blood-cerebrospinal fluid (CSF) barrier, from the CSF into choroid plexus epithelial cells, thereby playing a significant role in the clearance of cationic neurotoxins, xenobiotics and metabolic waste in the brain. Involved in bidirectional transport of the purine nucleoside adenosine and plays a role in the regulation of extracellular adenosine concentrations in cardiac tissues, in particular during ischemia. May be involved in organic cation uptake from the tubular lumen into renal tubular cells, thereby contributing to organic cation reabsorption in the kidney. Also transports adenine and guanidine. This chain is Equilibrative nucleoside transporter 4, found in Mus musculus (Mouse).